The primary structure comprises 273 residues: DnaJ homolog subfamily C member 27 (273 aa).

A required for interaction with MAPK1 region spans residues 1-18 (MEASMPKRKEPGKSLRIK). GTP is bound by residues 23–30 (GNAEVGKS), 71–75 (DMAGD), and 134–137 (NKID). Residues 217–273 (DSWDMLGVKPGASRDEVNKAYRKLAVLLHPDKCVAPGSEDAFKAVVNARTALLKNIK) enclose the J domain.

Belongs to the small GTPase superfamily. Rab family. As to quaternary structure, interacts directly with MAPK1 (wild-type and kinase-deficient forms). Interacts directly (in GTP-bound form) with MAP2K1 (wild-type and kinase-deficient forms).

It localises to the nucleus. In terms of biological role, GTPase which can activate the MEK/ERK pathway and induce cell transformation when overexpressed. May act as a nuclear scaffold for MAPK1, probably by association with MAPK1 nuclear export signal leading to enhanced ERK1/ERK2 signaling. The sequence is that of DnaJ homolog subfamily C member 27 (DNAJC27) from Bos taurus (Bovine).